Consider the following 572-residue polypeptide: Probable cysteine--tRNA ligase, mitochondrial (572 aa).

C81 serves as a coordination point for Zn(2+). Residue G82 participates in L-cysteine binding. The 'HIGH' region motif lies at 83–93 (PTVYDHAHLGH). T122 lines the L-cysteine pocket. The 'KIIK' region motif lies at 127 to 130 (KIIK). Residues C260, H285, and E289 each contribute to the Zn(2+) site. H285 is a binding site for L-cysteine. A 'KMSKS' region motif is present at residues 320 to 324 (KMSKS). Position 323 (K323) interacts with ATP.

Belongs to the class-I aminoacyl-tRNA synthetase family. Zn(2+) serves as cofactor.

The protein resides in the mitochondrion. It carries out the reaction tRNA(Cys) + L-cysteine + ATP = L-cysteinyl-tRNA(Cys) + AMP + diphosphate. The enzyme catalyses 2 L-cysteine = S-sulfanyl-L-cysteine + L-alanine. It catalyses the reaction S-sulfanyl-L-cysteine + L-cysteine = S-disulfanyl-L-cysteine + L-alanine. The catalysed reaction is S-sulfanyl-L-cysteine + tRNA(Cys) + ATP = (S)-sulfanyl-L-cysteinyl-tRNA(Cys) + AMP + diphosphate. It carries out the reaction S-disulfanyl-L-cysteine + tRNA(Cys) + ATP = (S)-disulfanyl-L-cysteinyl-tRNA(Cys) + AMP + diphosphate. Mitochondrial cysteine-specific aminoacyl-tRNA synthetase that catalyzes the ATP-dependent ligation of cysteine to tRNA(Cys). Its function is as follows. In addition to its role as an aminoacyl-tRNA synthetase, has also cysteine persulfide synthase activity. Produces reactive persulfide species such as cysteine persulfide (CysSSH) from substrate cysteine and mediate direct incorporation of CysSSH into proteins during translations, resulting in protein persulfides and polysulfides. CysSSHs behave as potent antioxidants and cellular protectants. The protein is Probable cysteine--tRNA ligase, mitochondrial (cars2) of Xenopus tropicalis (Western clawed frog).